A 146-amino-acid polypeptide reads, in one-letter code: MRQLAKDINAFLNEVILQAENQHEILIGHCTSEVALTNTQEHILMLLSEESLTNSELARRLNVSQAAVTKAIKSLVKEGMLETSKDSKDARVIFYQLTDLARPIAEEHHHHHEHTLLTYEQVATQFTPNEQKVIQRFLTALVGEIK.

The HTH marR-type domain maps to 1 to 143; it reads MRQLAKDINA…IQRFLTALVG (143 aa). The Zn(2+) site is built by Glu24, Cys30, Glu41, and His42. Positions 54 to 77 form a DNA-binding region, H-T-H motif; it reads NSELARRLNVSQAAVTKAIKSLVK. Zn(2+)-binding residues include Glu107, His108, and His112.

Homodimer.

With respect to regulation, zinc acts as a coregulator and is required for DNA-binding activity. Its function is as follows. Zinc-responsive regulator that acts both as a repressor and as an activator by regulating directly the promoters of its target genes. In the presence of zinc, directly represses the expression of the adcRCBA operon, of genes coding for a group of surface antigen zinc-binding pneumococcal histidine triad proteins (PhtA, PhtB, PhtD and PhtE), and of adcAII. Can also activate expression of adh. The polypeptide is Transcriptional regulator AdcR (adcR) (Streptococcus pneumoniae serotype 2 (strain D39 / NCTC 7466)).